The primary structure comprises 496 residues: tRNA-2-methylthio-N(6)-dimethylallyladenosine synthase (496 aa).

In terms of domain architecture, MTTase N-terminal spans 43–160; that stretch reads KKVFVTTQGC…LPELYDQSHQ (118 aa). 6 residues coordinate [4Fe-4S] cluster: cysteine 52, cysteine 89, cysteine 123, cysteine 204, cysteine 208, and cysteine 211. The Radical SAM core domain occupies 190–422; the sequence is RVEGFKAFVS…QKVIIDSTLA (233 aa). The region spanning 425–493 is the TRAM domain; it reads HEMVGTTTRV…PHMVKGEIEA (69 aa).

Belongs to the methylthiotransferase family. MiaB subfamily. In terms of assembly, monomer. Requires [4Fe-4S] cluster as cofactor.

It is found in the cytoplasm. The catalysed reaction is N(6)-dimethylallyladenosine(37) in tRNA + (sulfur carrier)-SH + AH2 + 2 S-adenosyl-L-methionine = 2-methylsulfanyl-N(6)-dimethylallyladenosine(37) in tRNA + (sulfur carrier)-H + 5'-deoxyadenosine + L-methionine + A + S-adenosyl-L-homocysteine + 2 H(+). Its function is as follows. Catalyzes the methylthiolation of N6-(dimethylallyl)adenosine (i(6)A), leading to the formation of 2-methylthio-N6-(dimethylallyl)adenosine (ms(2)i(6)A) at position 37 in tRNAs that read codons beginning with uridine. This chain is tRNA-2-methylthio-N(6)-dimethylallyladenosine synthase, found in Psychrobacter arcticus (strain DSM 17307 / VKM B-2377 / 273-4).